A 649-amino-acid polypeptide reads, in one-letter code: PTS system mannitol-specific EIICBA component (649 aa).

A PTS EIIC type-2 domain is found at phenylalanine 13 to glutamate 342. Helical transmembrane passes span isoleucine 25–asparagine 46, serine 51–lysine 71, serine 135–lysine 156, valine 166–lysine 186, alanine 274–valine 293, and leucine 314–methionine 335. Residues glutamine 384 to arginine 475 form the PTS EIIB type-2 domain. Cysteine 390 (phosphocysteine intermediate; for EIIB activity) is an active-site residue. A Phosphocysteine; by EIIA modification is found at cysteine 390. Residues phenylalanine 504–serine 646 enclose the PTS EIIA type-2 domain. Histidine 564 functions as the Tele-phosphohistidine intermediate; for EIIA activity in the catalytic mechanism. Histidine 564 carries the post-translational modification Phosphohistidine; by HPr.

In terms of assembly, homodimer. An intramolecular phosphotransfer takes places between His-564 and Cys-390.

The protein resides in the cell inner membrane. It carries out the reaction D-mannitol(out) + N(pros)-phospho-L-histidyl-[protein] = D-mannitol 1-phosphate(in) + L-histidyl-[protein]. In terms of biological role, the phosphoenolpyruvate-dependent sugar phosphotransferase system (sugar PTS), a major carbohydrate active transport system, catalyzes the phosphorylation of incoming sugar substrates concomitantly with their translocation across the cell membrane. This system is involved in D-mannitol transport. This is PTS system mannitol-specific EIICBA component (mtlA) from Vibrio cholerae serotype O1 (strain ATCC 39315 / El Tor Inaba N16961).